A 183-amino-acid chain; its full sequence is Ribosome rescue factor SmrB (183 aa).

One can recognise a Smr domain in the interval 98–173; it reads LDLHGLTQLQ…GDAALLVLIE (76 aa).

This sequence belongs to the SmrB family. As to quaternary structure, associates with collided ribosomes, but not with correctly translating polysomes.

Its function is as follows. Acts as a ribosome collision sensor. Detects stalled/collided disomes (pairs of ribosomes where the leading ribosome is stalled and a second ribosome has collided with it) and endonucleolytically cleaves mRNA at the 5' boundary of the stalled ribosome. Stalled/collided disomes form a new interface (primarily via the 30S subunits) that binds SmrB. Cleaved mRNA becomes available for tmRNA ligation, leading to ribosomal subunit dissociation and rescue of stalled ribosomes. The polypeptide is Ribosome rescue factor SmrB (Escherichia coli O17:K52:H18 (strain UMN026 / ExPEC)).